The chain runs to 195 residues: Penicillin-binding protein activator LpoB (195 aa).

A signal peptide spans 1–16; sequence MKKYLFVALAALVLTG. A lipid anchor (N-palmitoyl cysteine) is attached at Cys-17. Cys-17 is lipidated: S-diacylglycerol cysteine. The tract at residues 19 to 55 is disordered; that stretch reads SRPPEPEQPQPPVTVEPVTPPVVEEPQPPVTEPVPQP. Pro residues-rich tracts occupy residues 24–38 and 44–55; these read PEQPQPPVTVEPVTP and PQPPVTEPVPQP.

This sequence belongs to the LpoB family. In terms of assembly, interacts with PBP1b.

It is found in the cell outer membrane. Functionally, regulator of peptidoglycan synthesis that is essential for the function of penicillin-binding protein 1B (PBP1b). This chain is Penicillin-binding protein activator LpoB, found in Serratia proteamaculans (strain 568).